The chain runs to 493 residues: 3-octaprenyl-4-hydroxybenzoate carboxy-lyase (493 aa).

Asn172 contacts Mn(2+). Prenylated FMN is bound by residues 175 to 177, 189 to 191, and 194 to 195; these read IYR, RWL, and RG. A Mn(2+)-binding site is contributed by Glu238. Asp287 serves as the catalytic Proton donor.

It belongs to the UbiD family. In terms of assembly, homohexamer. It depends on prenylated FMN as a cofactor. Requires Mn(2+) as cofactor.

It is found in the cell membrane. The enzyme catalyses a 4-hydroxy-3-(all-trans-polyprenyl)benzoate + H(+) = a 2-(all-trans-polyprenyl)phenol + CO2. Its pathway is cofactor biosynthesis; ubiquinone biosynthesis. Its function is as follows. Catalyzes the decarboxylation of 3-octaprenyl-4-hydroxy benzoate to 2-octaprenylphenol, an intermediate step in ubiquinone biosynthesis. This is 3-octaprenyl-4-hydroxybenzoate carboxy-lyase from Shewanella sp. (strain ANA-3).